Reading from the N-terminus, the 1229-residue chain is MSELKAPSLQSLLESERGSTDSLLAESLQLDFEDLDDAEFAIPPTDVLPTLEAVLSEFEADSDVASEFGMPVPHATPTPSIGEDSTIRTDGRGGGGSIMRYTLLHGISAQLSSAAERVNAGAASSCAVAAFIAIGTSHGHILNFDVTQTLRWAHQDKHGQGAVASLAFNADSTRLLAGFSRGLVAMLDTHTGDVLRELFDVITPNTGVLHVKWTSRSSLALCADAGGSVWSLSFTRKLGIRGCQSRCLFSGARGEVCAVEPLIMDSQGRHELDQYCIVALATLSKYFIVTVRPRLRVIKYHVLQGPPDCLPLLAWHLVLIQAADTSRSVDPVIVVGRGNQLFFHQLFVSNGRITLLYLRHVQLQGSLLSAHWLGPKCVASLDTAEILHLVDVRSSKELECMDMANAGLVYGSAQFKGLATGGNVSPAFALAGSNACYNSVVSRGTQLYVLGARSLHIIGVRTWSERISFLVKHHRWQEACQLALDGYIASVDRPRKRAQAKERIIMLFKEYIANSARAPEYCLGAIVNCLITVGELDLLWTQLWEKLHNSSTELFLQHISEHIEKETIHSVNPVISQALVDYWLEHSPAKLEQLILKLDWMCLDLNQVLKAVKKHRLFRAQIYLNTQALNDYTAALTELLPLVTPDETDLGNCLLVYVSSCLAGREYPSGEIPVELVHQVKHDVLRCLTSQHSKENAGDELPYPYLRALLKFDTRETLNVISLAFQEREFSNELGISHRKRIINLLLEIMSPENATWAEIGCLLNFIAQQISMQCLPRDRQLLERVLSHLAQEEIANESSRQHSERENAWHELLSSNCLAEISSDEEQLRLAEKAKCYCVVEYLLEKLERYDTILDSYIRNEARHETMFAYMERHVASPKRSIFRQLKRNLRELLTINAKETTRLLSLHYPEKINELLDNLRREENLLYLFLKCLNDRKSELEASQMELLLELYCKMESSSTVEEFLRSNSGYRLENAIAIAESHHLNRSVIYLYEKQESYAKAFELSMELLKSAAGEEAAKEAQTISALLARSVETLPAQELERCWFALLQYILPHQELQSITKSLLHEASQHIDLHNLVQLIMNTHNVSTSFGDIKDLLMGMLDSSRHKTEALRASAGALCQDLHLKFVKRYQHAHRGLWVTTTKCSMCRQRLYDHSQVLIFGGCGHGIHEQCMEESETQFEECPRCFTAIPDQSIGLPRPNKNLISISSSLEMGALQLKAPPRRFI.

Positions 67–89 (EFGMPVPHATPTPSIGEDSTIRT) are disordered. The CHCR repeat unit spans residues 901 to 1063 (ETTRLLSLHY…ILPHQELQSI (163 aa)). The RING-type; atypical zinc-finger motif lies at 1148-1189 (CSMCRQRLYDHSQVLIFGGCGHGIHEQCMEESETQFEECPRC).

Belongs to the VPS8 family. In terms of assembly, component of the class C core vacuole/endosome tethering (CORVET) complex composed of at least Vps8, dor/Vps18, car/Vps33A and Vps16A; unlike in other species, Vps11 is not part of the Drosophila complex. Due to the reduced number of components the Drosophila CORVET complex is often referred to as the miniCORVET complex. Has a higher affinity than the homotypic fusion and vacuole protein sorting (HOPS) tethering complex-specific component lt/Vps41 for Vps16A, car/Vps33A and dor/Vps18, the core components shared by both tethering complexes.

It localises to the early endosome. Its function is as follows. Part of the class C core vacuole/endosome tethering (CORVET) complex involved in endo-lysosomal vesicle trafficking and lysosome biogenesis by facilitating docking and fusion of endosomal vesicles. The CORVET complex acts upstream of the homotypic fusion and vacuole protein sorting (HOPS) tethering complex but is not involved in autophagic flux. The CORVET complex may cooperate with the early endosomal tether Rbsn-5 to mediate endosomal fusion. As part of the CORVET complex recruited to endosomes by activated GTP-bound Rab5. Specifically required for endocytic trafficking in a subset of cells, such as hemocytes and nephrocytes, which are highly active in endocytosis. The polypeptide is Vacuolar protein sorting-associated protein 8 homolog (Drosophila melanogaster (Fruit fly)).